The following is a 187-amino-acid chain: Probable nicotinate-nucleotide adenylyltransferase (187 aa).

The protein belongs to the NadD family.

The enzyme catalyses nicotinate beta-D-ribonucleotide + ATP + H(+) = deamido-NAD(+) + diphosphate. It functions in the pathway cofactor biosynthesis; NAD(+) biosynthesis; deamido-NAD(+) from nicotinate D-ribonucleotide: step 1/1. Catalyzes the reversible adenylation of nicotinate mononucleotide (NaMN) to nicotinic acid adenine dinucleotide (NaAD). In Anaeromyxobacter sp. (strain K), this protein is Probable nicotinate-nucleotide adenylyltransferase.